Reading from the N-terminus, the 840-residue chain is Aconitase AMT8 (840 aa).

Asp-258–His-260 is a binding site for substrate. The [4Fe-4S] cluster site is built by Cys-450, Cys-513, and Cys-516. Substrate-binding positions include Arg-536, Arg-541, and Ser-709–Arg-710.

The protein belongs to the aconitase/IPM isomerase family.

Its pathway is mycotoxin biosynthesis. Functionally, aconitase; part of the gene clusters that mediate the biosynthesis of AM-toxins, host-selective toxins (HSTs) causing Alternaria blotch on apple, a worldwide distributed disease. AM-toxins are cyclic depsipeptides containing the 3 residues 2-hydroxy-isovaleric acid (2-HIV), dehydroalanine, L-alanine which are common for all 3 AM-toxins I to III. The fourth precursor is L-alpha-amino-methoxyphenyl-valeric acid (L-Amv) for AM-toxin I, L-alpha-amino-phenyl-valeric acid (L-Apv) for AM-toxin II, and L-alpha-amino-hydroxyphenyl-valeric acid (L-Ahv) for AM-toxin III. AM-toxins have two target sites for affecting susceptible apple cells; they cause invagination of the plasma membrane and electrolyte loss and chloroplast disorganization. The non-ribosomal peptide synthetase AMT1 contains 4 catalytic modules and is responsible for activation of each residue in AM-toxin. The aldo-keto reductase AMT2 catalyzes the conversion of 2-keto-isovaleric acid (2-KIV) to 2-hydroxy-isovaleric acid (2-HIV), one of the precursor residues incorporated by AMT1 during AM-toxin biosynthesis, by reduction of its ketone to an alcohol. The cytochrome P450 monooxygenase AMT3 and the thioesterase AMT4 are also important for AM-toxin production, but their exact function within the AM-toxin biosynthesis are not known yet. Up to 21 proteins (including AMT1 to AMT4) are predicted to be involved in AM-toxin biosynthesis since their expression ishighly up-regulated in AM-toxin-producing cultures. The chain is Aconitase AMT8 from Alternaria alternata (Alternaria rot fungus).